A 201-amino-acid chain; its full sequence is Glycerol-3-phosphate acyltransferase (201 aa).

6 helical membrane passes run 10-30, 60-80, 86-106, 116-136, 139-159, and 166-186; these read MLIG…GLIL, LAAA…LIAA, AAIA…WIGF, LGVL…AWIV, LLTR…PIAL, and ALAA…RANI.

Belongs to the PlsY family. Probably interacts with PlsX.

It localises to the cell inner membrane. It carries out the reaction an acyl phosphate + sn-glycerol 3-phosphate = a 1-acyl-sn-glycero-3-phosphate + phosphate. It functions in the pathway lipid metabolism; phospholipid metabolism. Its function is as follows. Catalyzes the transfer of an acyl group from acyl-phosphate (acyl-PO(4)) to glycerol-3-phosphate (G3P) to form lysophosphatidic acid (LPA). This enzyme utilizes acyl-phosphate as fatty acyl donor, but not acyl-CoA or acyl-ACP. This Brucella ovis (strain ATCC 25840 / 63/290 / NCTC 10512) protein is Glycerol-3-phosphate acyltransferase.